Consider the following 385-residue polypeptide: 4-hydroxy-3-methylbut-2-en-1-yl diphosphate synthase (flavodoxin) 2 (385 aa).

Residues Cys-281, Cys-284, Cys-316, and Glu-323 each contribute to the [4Fe-4S] cluster site.

This sequence belongs to the IspG family. [4Fe-4S] cluster serves as cofactor.

The enzyme catalyses (2E)-4-hydroxy-3-methylbut-2-enyl diphosphate + oxidized [flavodoxin] + H2O + 2 H(+) = 2-C-methyl-D-erythritol 2,4-cyclic diphosphate + reduced [flavodoxin]. It participates in isoprenoid biosynthesis; isopentenyl diphosphate biosynthesis via DXP pathway; isopentenyl diphosphate from 1-deoxy-D-xylulose 5-phosphate: step 5/6. In terms of biological role, converts 2C-methyl-D-erythritol 2,4-cyclodiphosphate (ME-2,4cPP) into 1-hydroxy-2-methyl-2-(E)-butenyl 4-diphosphate. The protein is 4-hydroxy-3-methylbut-2-en-1-yl diphosphate synthase (flavodoxin) 2 of Streptomyces avermitilis (strain ATCC 31267 / DSM 46492 / JCM 5070 / NBRC 14893 / NCIMB 12804 / NRRL 8165 / MA-4680).